The following is a 326-amino-acid chain: o-succinylbenzoate synthase (326 aa).

K110 functions as the Proton donor in the catalytic mechanism. Mg(2+) is bound by residues D138, E165, and D188. The Proton acceptor role is filled by K212.

Belongs to the mandelate racemase/muconate lactonizing enzyme family. MenC type 1 subfamily. A divalent metal cation serves as cofactor.

The enzyme catalyses (1R,6R)-6-hydroxy-2-succinyl-cyclohexa-2,4-diene-1-carboxylate = 2-succinylbenzoate + H2O. It participates in quinol/quinone metabolism; 1,4-dihydroxy-2-naphthoate biosynthesis; 1,4-dihydroxy-2-naphthoate from chorismate: step 4/7. The protein operates within quinol/quinone metabolism; menaquinone biosynthesis. Its function is as follows. Converts 2-succinyl-6-hydroxy-2,4-cyclohexadiene-1-carboxylate (SHCHC) to 2-succinylbenzoate (OSB). This Mycobacterium bovis (strain ATCC BAA-935 / AF2122/97) protein is o-succinylbenzoate synthase.